We begin with the raw amino-acid sequence, 163 residues long: MSDPLHVTFVCTGNICRSPMAEKMFAQQLRHRGLGDAVRVTSAGTGNWHVGSCADERAAGVLRAHGYPTDHRAAQVGTEHLAADLLVALDRNHARLLRQLGVEAARVRMLRSFDPRSGTHALDVEDPYYGDHSDFEEVFAVIESALPGLHDWVDERLARNGPS.

Cys11 (nucleophile) is an active-site residue. Arg17 is a catalytic residue. Residue Asp126 is the Proton donor of the active site.

Belongs to the low molecular weight phosphotyrosine protein phosphatase family.

The enzyme catalyses O-phospho-L-tyrosyl-[protein] + H2O = L-tyrosyl-[protein] + phosphate. Functionally, key virulence factor required for mycobacterial survival within host macrophages. Exhibits protein tyrosine phosphatase activity. Supports mycobacteria survival during infection by modulation of the phagosome maturation and modulation of the normal host signaling pathways, including host innate immune responses and cell apoptosis. This Mycobacterium bovis (strain ATCC BAA-935 / AF2122/97) protein is Low molecular weight protein-tyrosine phosphatase A (ptpA).